A 155-amino-acid chain; its full sequence is Ribonuclease H (155 aa).

The RNase H type-1 domain occupies 7–150; that stretch reads AQNAVDLYTD…ADKLACKGRD (144 aa). The Mg(2+) site is built by Asp-16, Glu-54, Asp-77, and Asp-142.

This sequence belongs to the RNase H family. As to quaternary structure, monomer. It depends on Mg(2+) as a cofactor.

It localises to the cytoplasm. The enzyme catalyses Endonucleolytic cleavage to 5'-phosphomonoester.. Its function is as follows. Endonuclease that specifically degrades the RNA of RNA-DNA hybrids. This is Ribonuclease H from Saccharopolyspora erythraea (strain ATCC 11635 / DSM 40517 / JCM 4748 / NBRC 13426 / NCIMB 8594 / NRRL 2338).